The sequence spans 596 residues: MKNIRNFSIIAHIDHGKSTLSDRLIQHCGGLQAREMEAQVLDSMDIERERGITIKAQSVTLDYKAKDGEIYQLNFIDTPGHVDFSYEVSRSLASCEGALLVVDAGQGVEAQTVANCYTALEMDLEVLPILNKIDLPQADPERVCEEIEHIIGIDATDAVTCSAKTGIGIEDVLETIVKNIPSPAGQIDAPLQALIVDSWFDNYQGVVSLVRVINGEVKKGDKMLVMSTGQVHQIDKVGIFTPKQTDTGVLRAGEVGFIIAGIKEIHGAPVGDTITISKKETANALPGFKKAQPQVYAGIFPISSDDYENFRDALNKLSLNDASLFFEPENSSALGFGFRIGFLGMLHMEIIQERLAREYDLDLITTAPTVNYEIASTNGDVISIDNPADLPAINNIEEIREPIVQANILVPQEYLGNVITLCIEKRGVQKDLIYHGNQVAVTYELPMAEVVMDFFDKLKSTSRGYASLDYHFIRFEAADMVRVDVMINGDRVDALAMITHRANSVARGRLLVDKLKELIHRQMFDIAIQAAIGNNVIARTTVKQLRKNVTAKCYGGDISRKKKLLQKQKDGKKRMKQVGNVEVPQEAFLAVLKLDS.

Residues 2-184 (KNIRNFSIIA…TIVKNIPSPA (183 aa)) enclose the tr-type G domain. GTP is bound by residues 14–19 (DHGKST) and 131–134 (NKID).

It belongs to the TRAFAC class translation factor GTPase superfamily. Classic translation factor GTPase family. LepA subfamily.

The protein localises to the cell inner membrane. It carries out the reaction GTP + H2O = GDP + phosphate + H(+). Required for accurate and efficient protein synthesis under certain stress conditions. May act as a fidelity factor of the translation reaction, by catalyzing a one-codon backward translocation of tRNAs on improperly translocated ribosomes. Back-translocation proceeds from a post-translocation (POST) complex to a pre-translocation (PRE) complex, thus giving elongation factor G a second chance to translocate the tRNAs correctly. Binds to ribosomes in a GTP-dependent manner. The protein is Elongation factor 4 of Colwellia psychrerythraea (strain 34H / ATCC BAA-681) (Vibrio psychroerythus).